The chain runs to 704 residues: Tetratricopeptide repeat protein 12 (704 aa).

Phosphothreonine is present on threonine 71. TPR repeat units lie at residues 105-138 (ADAL…LKDM), 139-172 (KVLY…DENC), and 173-206 (TKAY…NPKL).

Its subcellular location is the cytoplasm. Cytoplasmic protein that plays a role in the proper assembly of dynein arm complexes in motile cilia in both respiratory cells and sperm flagella. This chain is Tetratricopeptide repeat protein 12 (Ttc12), found in Mus musculus (Mouse).